The chain runs to 254 residues: MNNILNFYPAVITTDVAENWQIGFQDPATPIMEGIINLHYDLMFFICVISVFVSWMLGRTLWHFEQNQNKIPSSLTHGTLIEMIWTVTPAFILLIIAVPSFSLLYAMDEIISPAITIKTLGHQWYWSYEYSDYLNEDDDSINYDSYMIPEEDLEIGQFRLLEVDNRMVIPINTHIRVIVTAADVLHSWAVPSFRSKCDAIPGRLNQTSLFIKREGVYYGQCSEICGINHGFMPIVVEATSLPNYVSWISNKLNE.

At 1-37 the chain is on the mitochondrial intermembrane side; sequence MNNILNFYPAVITTDVAENWQIGFQDPATPIMEGIIN. The chain crosses the membrane as a helical span at residues 38 to 58; it reads LHYDLMFFICVISVFVSWMLG. The Mitochondrial matrix segment spans residues 59 to 83; the sequence is RTLWHFEQNQNKIPSSLTHGTLIEM. The chain crosses the membrane as a helical span at residues 84–104; the sequence is IWTVTPAFILLIIAVPSFSLL. Over 105–254 the chain is Mitochondrial intermembrane; it reads YAMDEIISPA…VSWISNKLNE (150 aa). Histidine 186, cysteine 221, glutamate 223, cysteine 225, histidine 229, and methionine 232 together coordinate Cu cation. Residue glutamate 223 participates in Mg(2+) binding.

The protein belongs to the cytochrome c oxidase subunit 2 family. Component of the cytochrome c oxidase (complex IV, CIV), a multisubunit enzyme composed of a catalytic core of 3 subunits and several supernumerary subunits. The complex exists as a monomer or a dimer and forms supercomplexes (SCs) in the inner mitochondrial membrane with ubiquinol-cytochrome c oxidoreductase (cytochrome b-c1 complex, complex III, CIII). The cofactor is Cu cation.

It localises to the mitochondrion inner membrane. It catalyses the reaction 4 Fe(II)-[cytochrome c] + O2 + 8 H(+)(in) = 4 Fe(III)-[cytochrome c] + 2 H2O + 4 H(+)(out). Functionally, component of the cytochrome c oxidase, the last enzyme in the mitochondrial electron transport chain which drives oxidative phosphorylation. The respiratory chain contains 3 multisubunit complexes succinate dehydrogenase (complex II, CII), ubiquinol-cytochrome c oxidoreductase (cytochrome b-c1 complex, complex III, CIII) and cytochrome c oxidase (complex IV, CIV), that cooperate to transfer electrons derived from NADH and succinate to molecular oxygen, creating an electrochemical gradient over the inner membrane that drives transmembrane transport and the ATP synthase. Cytochrome c oxidase is the component of the respiratory chain that catalyzes the reduction of oxygen to water. Electrons originating from reduced cytochrome c in the intermembrane space (IMS) are transferred via the dinuclear copper A center (CU(A)) of subunit 2 and heme A of subunit 1 to the active site in subunit 1, a binuclear center (BNC) formed by heme A3 and copper B (CU(B)). The BNC reduces molecular oxygen to 2 water molecules using 4 electrons from cytochrome c in the IMS and 4 protons from the mitochondrial matrix. This chain is Cytochrome c oxidase subunit 2 (COX2), found in Chondrus crispus (Carrageen Irish moss).